The following is a 419-amino-acid chain: Carboxypeptidase A1 (419 aa).

Positions 1-16 (MQGLLILSVLLGAALG) are cleaved as a signal peptide. A propeptide spans 17–110 (KEDFVGHQVL…QEQMFASQSR (94 aa)) (activation peptide). Residues 121-414 (TYHTLDEIYD…LGVLTIMEHT (294 aa)) form the Peptidase M14 domain. The Zn(2+) site is built by histidine 179 and glutamate 182. Substrate is bound by residues 179 to 182 (HSRE), arginine 237, and 254 to 255 (NR). Residues cysteine 248 and cysteine 271 are joined by a disulfide bond. Histidine 306 contributes to the Zn(2+) binding site. Residues 307–308 (SY) and tyrosine 358 each bind substrate. Residue glutamate 380 is the Proton donor/acceptor of the active site.

It belongs to the peptidase M14 family. In terms of assembly, monomer. May form a complex with proelastase 2. Requires Zn(2+) as cofactor. Pancreas.

It is found in the secreted. The enzyme catalyses Release of a C-terminal amino acid, but little or no action with -Asp, -Glu, -Arg, -Lys or -Pro.. It carries out the reaction leukotriene C4 + H2O = leukotriene F4 + glycine. With respect to regulation, inhibited by interaction with the S.magnifica carboxypeptidase inhibitor SmCI. Its function is as follows. Carboxypeptidase that catalyzes the release of a C-terminal amino acid, but has little or no action with -Asp, -Glu, -Arg, -Lys or -Pro. Catalyzes the conversion of leukotriene C4 to leukotriene F4 via the hydrolysis of an amide bond. The protein is Carboxypeptidase A1 (CPA1) of Bos taurus (Bovine).